Consider the following 141-residue polypeptide: Small ribosomal subunit protein uS8c (141 aa).

This sequence belongs to the universal ribosomal protein uS8 family. In terms of assembly, part of the 30S ribosomal subunit.

It localises to the plastid. The protein resides in the chloroplast. Its function is as follows. One of the primary rRNA binding proteins, it binds directly to 16S rRNA central domain where it helps coordinate assembly of the platform of the 30S subunit. In Chlamydomonas reinhardtii (Chlamydomonas smithii), this protein is Small ribosomal subunit protein uS8c (rps8).